The sequence spans 237 residues: Urease subunit alpha (237 aa).

Residues Met1 to Asp102 are urease gamma. The interval Asn103–Gln237 is urease beta.

It in the N-terminal section; belongs to the urease gamma subunit family. This sequence in the C-terminal section; belongs to the urease beta subunit family. Heterohexamer of 3 UreA (alpha) and 3 UreB (beta) subunits.

The protein resides in the cytoplasm. The enzyme catalyses urea + 2 H2O + H(+) = hydrogencarbonate + 2 NH4(+). The protein operates within nitrogen metabolism; urea degradation; CO(2) and NH(3) from urea (urease route): step 1/1. The sequence is that of Urease subunit alpha from Helicobacter felis.